Consider the following 494-residue polypeptide: Subtilisin-like serine protease EN45_078720 (494 aa).

A signal peptide spans 1–16 (MKGFLSLTLLPLLVAA). A propeptide spans 17 to 136 (SPVAVNSIHN…IEKDSEVRTM (120 aa)) (removed in mature form). An Inhibitor I9 domain is found at 43 to 136 (SYIVVFKKHV…IEKDSEVRTM (94 aa)). The 303-residue stretch at 146–448 (PWGLARISHR…GGSANYTKIL (303 aa)) folds into the Peptidase S8 domain. 2 igE-binding regions span residues 180 to 198 (VIDTGANVKHVDFEGRANW) and 209 to 231 (EDGNGHGTHCSGTIAGKKFGVAK). Active-site charge relay system residues include Asp182 and His214. 2 N-linked (GlcNAc...) asparagine glycosylation sites follow: Asn244 and Asn280. Catalysis depends on Ser376, which acts as the Charge relay system. Asn443 carries an N-linked (GlcNAc...) asparagine glycan. A propeptide spans 454–494 (KAHNAETTVEDRIGGIIDSAEKAFHKELGAIYSEIKDAVSA) (removed in mature form).

The protein belongs to the peptidase S8 family.

In terms of biological role, serine protease. This chain is Subtilisin-like serine protease EN45_078720, found in Penicillium chrysogenum (Penicillium notatum).